The primary structure comprises 547 residues: Cilia- and flagella- associated protein 210 (547 aa).

Coiled coils occupy residues 50–131 (ERIR…RKKA), 183–251 (VKLN…MKKN), and 342–405 (IARD…KADK). Residues 214-237 (KQIEEHKEEEEARKKSEEKDAEEM) are disordered.

As to quaternary structure, microtubule inner protein component of sperm flagellar doublet microtubules.

Its subcellular location is the cytoplasm. It is found in the cytoskeleton. The protein localises to the cilium axoneme. It localises to the flagellum axoneme. In terms of biological role, microtubule inner protein (MIP) part of the dynein-decorated doublet microtubules (DMTs) in cilia axoneme, which is required for motile cilia beating. The chain is Cilia- and flagella- associated protein 210 (Cfap210) from Mus musculus (Mouse).